The chain runs to 136 residues: Ubiquinol-cytochrome-c reductase complex assembly factor 2 (136 aa).

The N-terminal 13 residues, 1–13 (MAALRYRRFLKLC), are a transit peptide targeting the mitochondrion.

As to quaternary structure, interacts with UQCC1.

It is found in the mitochondrion matrix. It localises to the mitochondrion nucleoid. The protein localises to the mitochondrion. Its subcellular location is the mitochondrion intermembrane space. The protein resides in the mitochondrion inner membrane. Required for the assembly of the ubiquinol-cytochrome c reductase complex (mitochondrial respiratory chain complex III or cytochrome b-c1 complex). Plays a role in the modulation of respiratory chain activities such as oxygen consumption and ATP production and via its modulation of the respiratory chain activity can regulate skeletal muscle differentiation and insulin secretion by pancreatic beta-cells. Involved in cytochrome b translation and/or stability. This chain is Ubiquinol-cytochrome-c reductase complex assembly factor 2 (Uqcc2), found in Rattus norvegicus (Rat).